The chain runs to 133 residues: MSDYIIKVGKRKTAIARAIIRKGSGKFLINGYPIELYPIEILREKMLEPIRILGDRSKEIDIDVNVHGGGNTGQADATRTAMAKAIIEYFKDSDLEAEIRAYDRSMLVNDVRRKMPKKPMGYGARAKRQKSYR.

The protein belongs to the universal ribosomal protein uS9 family.

In Picrophilus torridus (strain ATCC 700027 / DSM 9790 / JCM 10055 / NBRC 100828 / KAW 2/3), this protein is Small ribosomal subunit protein uS9.